A 326-amino-acid chain; its full sequence is Cobalamin biosynthesis protein CobD (326 aa).

4 helical membrane passes run M58–L78, L81–L101, F157–L177, and V304–L324.

This sequence belongs to the CobD/CbiB family.

Its subcellular location is the cell membrane. The protein operates within cofactor biosynthesis; adenosylcobalamin biosynthesis. Functionally, converts cobyric acid to cobinamide by the addition of aminopropanol on the F carboxylic group. This chain is Cobalamin biosynthesis protein CobD, found in Sinorhizobium fredii (strain NBRC 101917 / NGR234).